A 324-amino-acid chain; its full sequence is Adducin-related protein C1289.14 (324 aa).

It belongs to the aldolase class II family. Adducin subfamily.

The polypeptide is Adducin-related protein C1289.14 (Schizosaccharomyces pombe (strain 972 / ATCC 24843) (Fission yeast)).